The primary structure comprises 258 residues: UPF0246 protein YaaA (258 aa).

This sequence belongs to the UPF0246 family.

This chain is UPF0246 protein YaaA, found in Escherichia coli O157:H7 (strain EC4115 / EHEC).